A 349-amino-acid chain; its full sequence is DNA integrity scanning protein DisA (349 aa).

The 141-residue stretch at 3-143 (KQDLMDIIVK…LKYRLKNFDE (141 aa)) folds into the DAC domain. ATP-binding positions include G70, V88, and 101–105 (TRHRT).

The protein belongs to the DisA family. Homooctamer. Requires Mg(2+) as cofactor.

The catalysed reaction is 2 ATP = 3',3'-c-di-AMP + 2 diphosphate. Its function is as follows. Participates in a DNA-damage check-point. DisA forms globular foci that rapidly scan along the chromosomes searching for lesions. Functionally, also has diadenylate cyclase activity, catalyzing the condensation of 2 ATP molecules into cyclic di-AMP (c-di-AMP). c-di-AMP likely acts as a signaling molecule that may couple DNA integrity with a cellular process. This chain is DNA integrity scanning protein DisA, found in Fusobacterium nucleatum subsp. nucleatum (strain ATCC 25586 / DSM 15643 / BCRC 10681 / CIP 101130 / JCM 8532 / KCTC 2640 / LMG 13131 / VPI 4355).